Reading from the N-terminus, the 479-residue chain is ATP synthase subunit beta (479 aa).

153-160 contacts ATP; the sequence is GGAGVGKT.

This sequence belongs to the ATPase alpha/beta chains family. In terms of assembly, F-type ATPases have 2 components, CF(1) - the catalytic core - and CF(0) - the membrane proton channel. CF(1) has five subunits: alpha(3), beta(3), gamma(1), delta(1), epsilon(1). CF(0) has three main subunits: a(1), b(2) and c(9-12). The alpha and beta chains form an alternating ring which encloses part of the gamma chain. CF(1) is attached to CF(0) by a central stalk formed by the gamma and epsilon chains, while a peripheral stalk is formed by the delta and b chains.

Its subcellular location is the cell membrane. The catalysed reaction is ATP + H2O + 4 H(+)(in) = ADP + phosphate + 5 H(+)(out). Produces ATP from ADP in the presence of a proton gradient across the membrane. The catalytic sites are hosted primarily by the beta subunits. The chain is ATP synthase subunit beta from Lactobacillus helveticus (strain DPC 4571).